Consider the following 583-residue polypeptide: uncharacterized protein (583 aa).

The span at 1-38 (MGQGESIPSRQIQRDASMQAVSSESENINDSDRQNSGF) shows a compositional bias: polar residues. Disordered stretches follow at residues 1–39 (MGQG…SGFS), 53–124 (GLRR…AIPQ), 156–197 (TQNN…TAIG), and 362–452 (NSGS…QTDH). Over residues 70-80 (GNRDRTTERSA) the composition is skewed to basic and acidic residues. The span at 88-102 (SLLNRNSPSLRSLSP) shows a compositional bias: low complexity. Composition is skewed to polar residues over residues 156–165 (TQNNQSTLAS), 172–191 (VSSS…NLES), 384–408 (LISS…NENV), and 420–452 (ASTA…QTDH). The segment at 525 to 568 (CLVCLSNFELNDECRRLKQCNHFFHRECIDQWLTSSQNSCPLCR) adopts an RING-type zinc-finger fold. At Ser-580 the chain carries Phosphoserine.

Its subcellular location is the membrane. This is an uncharacterized protein from Schizosaccharomyces pombe (strain 972 / ATCC 24843) (Fission yeast).